A 270-amino-acid polypeptide reads, in one-letter code: Glutamate racemase (270 aa).

Residues 14-15 and 46-47 contribute to the substrate site; these read DS and YG. The active-site Proton donor/acceptor is the Cys-77. 78-79 contacts substrate; the sequence is NT. The active-site Proton donor/acceptor is the Cys-186. 187–188 contacts substrate; it reads TH.

This sequence belongs to the aspartate/glutamate racemases family.

It catalyses the reaction L-glutamate = D-glutamate. The protein operates within cell wall biogenesis; peptidoglycan biosynthesis. Provides the (R)-glutamate required for cell wall biosynthesis. This is Glutamate racemase from Trichodesmium erythraeum (strain IMS101).